Reading from the N-terminus, the 369-residue chain is 3-dehydroquinate synthase (369 aa).

NAD(+)-binding positions include Asp-70–Lys-75, Gly-104–Asp-108, Thr-128–Thr-129, Lys-141, Lys-150, and Thr-168–Thr-171. Zn(2+)-binding residues include Glu-183, His-246, and His-262.

It belongs to the sugar phosphate cyclases superfamily. Dehydroquinate synthase family. It depends on Co(2+) as a cofactor. The cofactor is Zn(2+). NAD(+) is required as a cofactor.

It is found in the cytoplasm. The enzyme catalyses 7-phospho-2-dehydro-3-deoxy-D-arabino-heptonate = 3-dehydroquinate + phosphate. It participates in metabolic intermediate biosynthesis; chorismate biosynthesis; chorismate from D-erythrose 4-phosphate and phosphoenolpyruvate: step 2/7. Catalyzes the conversion of 3-deoxy-D-arabino-heptulosonate 7-phosphate (DAHP) to dehydroquinate (DHQ). The polypeptide is 3-dehydroquinate synthase (Rhodococcus erythropolis (strain PR4 / NBRC 100887)).